The chain runs to 145 residues: Large ribosomal subunit protein uL15 (145 aa).

Basic residues-rich tracts occupy residues 1–13 and 19–29; these read MVRERTKKLRGGH and KAGRGKGKKGG. Residues 1–33 form a disordered region; the sequence is MVRERTKKLRGGHYGRGMKAGRGKGKKGGRGNA.

This sequence belongs to the universal ribosomal protein uL15 family. Part of the 50S ribosomal subunit.

Binds to the 23S rRNA. This Thermoplasma volcanium (strain ATCC 51530 / DSM 4299 / JCM 9571 / NBRC 15438 / GSS1) protein is Large ribosomal subunit protein uL15.